A 189-amino-acid chain; its full sequence is Photosystem I assembly protein Ycf4 (189 aa).

Transmembrane regions (helical) follow at residues 25–45 (SVYFWAVALTGGGLGFTLAGL) and 62–82 (LVFIPQGIAMLFYGVLGSLAG).

Belongs to the Ycf4 family.

Its subcellular location is the cellular thylakoid membrane. Seems to be required for the assembly of the photosystem I complex. This Synechococcus sp. (strain JA-3-3Ab) (Cyanobacteria bacterium Yellowstone A-Prime) protein is Photosystem I assembly protein Ycf4.